The following is a 195-amino-acid chain: Probable GTP-binding protein EngB (195 aa).

Residues 24-195 (GLSEVGLSGR…QIWNVIEKYL (172 aa)) form the EngB-type G domain. GTP-binding positions include 32–39 (GRSNVGKS), 59–63 (GKTQT), 77–80 (DVPG), 144–147 (TKED), and 176–178 (YSS). Residues serine 39 and threonine 61 each coordinate Mg(2+).

Belongs to the TRAFAC class TrmE-Era-EngA-EngB-Septin-like GTPase superfamily. EngB GTPase family. Requires Mg(2+) as cofactor.

Necessary for normal cell division and for the maintenance of normal septation. The sequence is that of Probable GTP-binding protein EngB from Staphylococcus saprophyticus subsp. saprophyticus (strain ATCC 15305 / DSM 20229 / NCIMB 8711 / NCTC 7292 / S-41).